The chain runs to 106 residues: A-type ATP synthase subunit F (106 aa).

The protein belongs to the V-ATPase F subunit family. As to quaternary structure, has multiple subunits with at least A(3), B(3), C, D, E, F, H, I and proteolipid K(x).

It is found in the cell membrane. Its function is as follows. Component of the A-type ATP synthase that produces ATP from ADP in the presence of a proton gradient across the membrane. The protein is A-type ATP synthase subunit F of Haloferax volcanii (strain ATCC 29605 / DSM 3757 / JCM 8879 / NBRC 14742 / NCIMB 2012 / VKM B-1768 / DS2) (Halobacterium volcanii).